The following is a 145-amino-acid chain: MLNQLENLAKCVGGNNELIDQWLQARKGLLVAYYHLIGLKPNKEKHTPLDEEALDAFCHQLVDYLSAGHFLVYDSIVPEGESSSTLTYSGLQENTQQIMALYDSHLENAIDHDNYLSFQEALSGVGEALATRFVLEDKLIQQAME.

This sequence belongs to the Rsd/AlgQ family. Interacts with RpoD.

It localises to the cytoplasm. Functionally, binds RpoD and negatively regulates RpoD-mediated transcription activation by preventing the interaction between the primary sigma factor RpoD with the catalytic core of the RNA polymerase and with promoter DNA. May be involved in replacement of the RNA polymerase sigma subunit from RpoD to RpoS during the transition from exponential growth to the stationary phase. This is Regulator of sigma D from Sodalis glossinidius (strain morsitans).